Consider the following 304-residue polypeptide: ATP phosphoribosyltransferase (304 aa).

This sequence belongs to the ATP phosphoribosyltransferase family. Long subfamily. Mg(2+) is required as a cofactor.

It localises to the cytoplasm. It catalyses the reaction 1-(5-phospho-beta-D-ribosyl)-ATP + diphosphate = 5-phospho-alpha-D-ribose 1-diphosphate + ATP. It participates in amino-acid biosynthesis; L-histidine biosynthesis; L-histidine from 5-phospho-alpha-D-ribose 1-diphosphate: step 1/9. With respect to regulation, feedback inhibited by histidine. In terms of biological role, catalyzes the condensation of ATP and 5-phosphoribose 1-diphosphate to form N'-(5'-phosphoribosyl)-ATP (PR-ATP). Has a crucial role in the pathway because the rate of histidine biosynthesis seems to be controlled primarily by regulation of HisG enzymatic activity. This is ATP phosphoribosyltransferase from Xylella fastidiosa (strain M12).